We begin with the raw amino-acid sequence, 196 residues long: Nucleoid occlusion factor SlmA (196 aa).

An HTH tetR-type domain is found at 6 to 66 (RNRREEILQA…GLIEFVEDTL (61 aa)). The H-T-H motif DNA-binding region spans 29–48 (TTAKLAANLGVSEAALYRHF). Residues 108–135 (DALMGEHDRLRGRMEDLFNRIESSIKQI) adopt a coiled-coil conformation.

The protein belongs to the nucleoid occlusion factor SlmA family. As to quaternary structure, homodimer. Interacts with FtsZ.

Its subcellular location is the cytoplasm. The protein resides in the nucleoid. Required for nucleoid occlusion (NO) phenomenon, which prevents Z-ring formation and cell division over the nucleoid. Acts as a DNA-associated cell division inhibitor that binds simultaneously chromosomal DNA and FtsZ, and disrupts the assembly of FtsZ polymers. SlmA-DNA-binding sequences (SBS) are dispersed on non-Ter regions of the chromosome, preventing FtsZ polymerization at these regions. The chain is Nucleoid occlusion factor SlmA from Idiomarina loihiensis (strain ATCC BAA-735 / DSM 15497 / L2-TR).